The following is a 139-amino-acid chain: D-ribose pyranase (139 aa).

His-20 acts as the Proton donor in catalysis. Substrate is bound by residues Asp-28, His-106, and 128 to 130; that span reads YAN.

Belongs to the RbsD / FucU family. RbsD subfamily. Homodecamer.

Its subcellular location is the cytoplasm. It carries out the reaction beta-D-ribopyranose = beta-D-ribofuranose. It participates in carbohydrate metabolism; D-ribose degradation; D-ribose 5-phosphate from beta-D-ribopyranose: step 1/2. Functionally, catalyzes the interconversion of beta-pyran and beta-furan forms of D-ribose. The polypeptide is D-ribose pyranase (Escherichia coli O45:K1 (strain S88 / ExPEC)).